The sequence spans 506 residues: Steroid (22S)-hydroxylase (506 aa).

The chain crosses the membrane as a helical span at residues 12–32; it reads LLFFLPFILLALLTFYTTTVA. Residue Cys449 participates in heme binding.

The protein belongs to the cytochrome P450 family. The cofactor is heme. Highly expressed in roots and leaf blades. Expressed in shoot apex, stems, leaf sheaths, inflorescences and flowers.

The protein resides in the membrane. It catalyses the reaction a C28-steroid + reduced [NADPH--hemoprotein reductase] + O2 = a (22S)-22-hydroxy C28-steroid + oxidized [NADPH--hemoprotein reductase] + H2O + H(+). It carries out the reaction campesterol + reduced [NADPH--hemoprotein reductase] + O2 = (22S)-22-hydroxycampesterol + oxidized [NADPH--hemoprotein reductase] + H2O + H(+). The enzyme catalyses campestanol + reduced [NADPH--hemoprotein reductase] + O2 = 6-deoxycathasterone + oxidized [NADPH--hemoprotein reductase] + H2O + H(+). The protein operates within plant hormone biosynthesis; brassinosteroid biosynthesis. In terms of biological role, catalyzes the C22-alpha-hydroxylation step in brassinosteroid biosynthesis, which is the rate-limiting step in this biosynthetic pathway. Catalyzes the conversion of campesterol (CR) to (22S)-22-hydroxycampesterol (22-OHCR, 22-hydroxyCR) and of campestanol (CN) to 6-deoxycathasterone (6-deoxoCT). Required for auxin responses involved in the regulation of epidermal cells length of the lamina joint. This Oryza sativa subsp. japonica (Rice) protein is Steroid (22S)-hydroxylase.